A 329-amino-acid chain; its full sequence is RING finger protein 225 (329 aa).

The tract at residues 1-55 is disordered; that stretch reads MPCPRPFWLRHSRAPQGSGPSSPGSLSAPRSPSRGEDQEEEEEEEGDGSPGSGPI. The span at 14–32 shows a compositional bias: low complexity; that stretch reads APQGSGPSSPGSLSAPRSP. The span at 37 to 47 shows a compositional bias: acidic residues; it reads DQEEEEEEEGD. The RING-type zinc finger occupies 64 to 112; it reads CLICVSSFDGVFKLPKRLDCGHVFCLECLARLSLATAGGGNAVACPVCR. Residues 122-181 form a disordered region; the sequence is GLPALPTQSGLLPRDARAPPSRQGSVRFDRRRGLLYLRPPPPPPGPRKARAPPPPPPLRL. Residues 159–179 are compositionally biased toward pro residues; that stretch reads RPPPPPPGPRKARAPPPPPPL. A helical membrane pass occupies residues 203 to 223; that stretch reads ALAVLVAAGLVVSGVYIFFLI. The tract at residues 248–329 is disordered; it reads FPPRPPPGSP…RGARRLWGSQ (82 aa). The segment covering 281-293 has biased composition (acidic residues); that stretch reads DALEPEAGPEDPA. A compositionally biased stretch (basic and acidic residues) spans 294 to 304; that stretch reads EAERTLDRRSD.

Its subcellular location is the membrane. The chain is RING finger protein 225 from Homo sapiens (Human).